Consider the following 525-residue polypeptide: GMP synthase [glutamine-hydrolyzing] (525 aa).

In terms of domain architecture, Glutamine amidotransferase type-1 spans 9-207 (RILILDFGSQ…VRDICQCEAL (199 aa)). The active-site Nucleophile is the Cys-86. Residues His-181 and Glu-183 contribute to the active site. A GMPS ATP-PPase domain is found at 208–400 (WTPAKIIDDA…LGLPYDMLYR (193 aa)). Residue 235–241 (SGGVDSS) participates in ATP binding.

Homodimer.

It catalyses the reaction XMP + L-glutamine + ATP + H2O = GMP + L-glutamate + AMP + diphosphate + 2 H(+). Its pathway is purine metabolism; GMP biosynthesis; GMP from XMP (L-Gln route): step 1/1. In terms of biological role, catalyzes the synthesis of GMP from XMP. This is GMP synthase [glutamine-hydrolyzing] from Escherichia coli (strain K12 / MC4100 / BW2952).